The following is a 419-amino-acid chain: 26S proteasome regulatory subunit 8 homolog B (419 aa).

202 to 209 (GPPGTGKT) contributes to the ATP binding site. Lysine 406 is covalently cross-linked (Glycyl lysine isopeptide (Lys-Gly) (interchain with G-Cter in ubiquitin)).

It belongs to the AAA ATPase family. Component of the 19S regulatory particle (RP/PA700) base subcomplex of the 26S proteasome. The 26S proteasome is composed of a core protease (CP), known as the 20S proteasome, capped at one or both ends by the 19S regulatory particle (RP/PA700). The RP/PA700 complex is composed of at least 17 different subunits in two subcomplexes, the base and the lid, which form the portions proximal and distal to the 20S proteolytic core, respectively.

Its subcellular location is the cytoplasm. The protein resides in the nucleus. The 26S proteasome is involved in the ATP-dependent degradation of ubiquitinated proteins. The regulatory (or ATPase) complex confers ATP dependency and substrate specificity to the 26S complex. The polypeptide is 26S proteasome regulatory subunit 8 homolog B (RPT6B) (Arabidopsis thaliana (Mouse-ear cress)).